Reading from the N-terminus, the 506-residue chain is RNA-splicing ligase RtcB homolog 1 (506 aa).

The Mn(2+) site is built by Asp120, Cys123, His228, His260, and His354. 227 to 231 (NHYAE) provides a ligand contact to GMP. GMP is bound by residues 354 to 355 (HN), 403 to 406 (GGSM), Ser410, 429 to 432 (HGAG), and Lys505. Residue His429 is the GMP-histidine intermediate of the active site.

Belongs to the RtcB family. As to quaternary structure, catalytic component of the tRNA-splicing ligase complex. Mn(2+) is required as a cofactor.

It catalyses the reaction a 3'-end 3'-phospho-ribonucleotide-RNA + a 5'-end dephospho-ribonucleoside-RNA + GTP = a ribonucleotidyl-ribonucleotide-RNA + GMP + diphosphate. The enzyme catalyses a 3'-end 2',3'-cyclophospho-ribonucleotide-RNA + a 5'-end dephospho-ribonucleoside-RNA + GTP + H2O = a ribonucleotidyl-ribonucleotide-RNA + GMP + diphosphate + H(+). Functionally, catalytic subunit of the tRNA-splicing ligase complex that acts by directly joining spliced tRNA halves to mature-sized tRNAs by incorporating the precursor-derived splice junction phosphate into the mature tRNA as a canonical 3',5'-phosphodiester. May act as an RNA ligase with broad substrate specificity, and may function toward other RNAs. This is RNA-splicing ligase RtcB homolog 1 from Culex quinquefasciatus (Southern house mosquito).